A 308-amino-acid chain; its full sequence is Oxygen-dependent coproporphyrinogen-III oxidase (308 aa).

Residue Ser-92 participates in substrate binding. 2 residues coordinate a divalent metal cation: His-96 and His-106. His-106 serves as the catalytic Proton donor. 108 to 110 (NVR) is a substrate binding site. A divalent metal cation is bound by residues His-145 and His-175. An important for dimerization region spans residues 240–275 (YVEFNLVWDRGTLFGLQTGGRTESILMSMPPLVRWE). 258–260 (GGR) lines the substrate pocket.

It belongs to the aerobic coproporphyrinogen-III oxidase family. As to quaternary structure, homodimer. It depends on a divalent metal cation as a cofactor.

It is found in the cytoplasm. The enzyme catalyses coproporphyrinogen III + O2 + 2 H(+) = protoporphyrinogen IX + 2 CO2 + 2 H2O. Its pathway is porphyrin-containing compound metabolism; protoporphyrin-IX biosynthesis; protoporphyrinogen-IX from coproporphyrinogen-III (O2 route): step 1/1. In terms of biological role, involved in the heme biosynthesis. Catalyzes the aerobic oxidative decarboxylation of propionate groups of rings A and B of coproporphyrinogen-III to yield the vinyl groups in protoporphyrinogen-IX. The chain is Oxygen-dependent coproporphyrinogen-III oxidase from Salmonella paratyphi A (strain ATCC 9150 / SARB42).